Here is an 814-residue protein sequence, read N- to C-terminus: ATP-dependent 6-phosphofructokinase 1 (814 aa).

Residues 1 to 420 (MDADASTITP…NLETYKLLTK (420 aa)) form an N-terminal catalytic PFK domain 1 region. Residues Gly55, 118-119 (RS), and 148-151 (GDGS) each bind ATP. Asp149 provides a ligand contact to Mg(2+). Residues 194-196 (SID), Arg231, 238-240 (MGR), Glu294, Arg322, and 328-331 (HVQR) contribute to the substrate site. The Proton acceptor role is filled by Asp196. The interval 421–435 (MRTVEKDNLSEGHKF) is interdomain linker. The C-terminal regulatory PFK domain 2 stretch occupies residues 436–814 (NVAVINVGAP…EEESADSHMF (379 aa)). Beta-D-fructose 2,6-bisphosphate-binding positions include Lys505, 563-567 (TISNN), Arg601, 608-610 (MGG), Glu664, Arg690, 696-699 (HVQQ), and Arg771.

It belongs to the phosphofructokinase type A (PFKA) family. ATP-dependent PFK group I subfamily. Eukaryotic two domain clade 'E' sub-subfamily. Homotetramer. Mg(2+) serves as cofactor.

It localises to the cytoplasm. It catalyses the reaction beta-D-fructose 6-phosphate + ATP = beta-D-fructose 1,6-bisphosphate + ADP + H(+). Its pathway is carbohydrate degradation; glycolysis; D-glyceraldehyde 3-phosphate and glycerone phosphate from D-glucose: step 3/4. Allosterically activated by ADP, AMP, or fructose 2,6-bisphosphate, and allosterically inhibited by ATP or citrate. Catalyzes the phosphorylation of D-fructose 6-phosphate to fructose 1,6-bisphosphate by ATP, the first committing step of glycolysis. This chain is ATP-dependent 6-phosphofructokinase 1, found in Caenorhabditis elegans.